We begin with the raw amino-acid sequence, 66 residues long: Large ribosomal subunit protein bL35 (66 aa).

It belongs to the bacterial ribosomal protein bL35 family.

The polypeptide is Large ribosomal subunit protein bL35 (Brucella canis (strain ATCC 23365 / NCTC 10854 / RM-666)).